The following is a 429-amino-acid chain: UDP-N-acetylglucosamine 1-carboxyvinyltransferase (429 aa).

22 to 23 (KN) provides a ligand contact to phosphoenolpyruvate. A UDP-N-acetyl-alpha-D-glucosamine-binding site is contributed by arginine 102. Cysteine 126 serves as the catalytic Proton donor. Cysteine 126 is subject to 2-(S-cysteinyl)pyruvic acid O-phosphothioketal. UDP-N-acetyl-alpha-D-glucosamine-binding positions include 131 to 135 (RPVDL), 171 to 174 (KVSV), aspartate 316, and isoleucine 338.

This sequence belongs to the EPSP synthase family. MurA subfamily.

It is found in the cytoplasm. It catalyses the reaction phosphoenolpyruvate + UDP-N-acetyl-alpha-D-glucosamine = UDP-N-acetyl-3-O-(1-carboxyvinyl)-alpha-D-glucosamine + phosphate. Its pathway is cell wall biogenesis; peptidoglycan biosynthesis. Its function is as follows. Cell wall formation. Adds enolpyruvyl to UDP-N-acetylglucosamine. In Chelativorans sp. (strain BNC1), this protein is UDP-N-acetylglucosamine 1-carboxyvinyltransferase.